Reading from the N-terminus, the 665-residue chain is Pentatricopeptide repeat-containing protein At1g04840 (665 aa).

PPR repeat units follow at residues 90 to 124 (NPFVLNALIRGLTENARFESSVRHFILMLRLGVKP), 125 to 155 (DRLTFPFVLKSNSKLGFRWLGRALHAATLKN), 160 to 190 (DSFVRLSLVDMYAKTGQLKHAFQVFEESPDR), 195 to 229 (SILIWNVLINGYCRAKDMHMATTLFRSMPERNSGS), 230 to 256 (WSTLIKGYVDSGELNRAKQLFELMPEK), 257 to 291 (NVVSWTTLINGFSQTGDYETAISTYFEMLEKGLKP), 292 to 326 (NEYTIAAVLSACSKSGALGSGIRIHGYILDNGIKL), 327 to 357 (DRAIGTALVDMYAKCGELDCAATVFSNMNHK), 358 to 392 (DILSWTAMIQGWAVHGRFHQAIQCFRQMMYSGEKP), 393 to 423 (DEVVFLAVLTACLNSSEVDLGLNFFDSMRLD), and 429 to 459 (TLKHYVLVVDLLGRAGKLNEAHELVENMPIN). Residues 464–539 (TWAALYRACK…SLGWSYIELD (76 aa)) are type E motif. Residues 540 to 570 (GQLNKFSAGDYSHKLTQEIGLKLDEIISLAI) are type E(+) motif. The type DYW motif stretch occupies residues 571-665 (QKGYNPGADW…DGRCSCGDYW (95 aa)).

It belongs to the PPR family. PCMP-H subfamily.

In Arabidopsis thaliana (Mouse-ear cress), this protein is Pentatricopeptide repeat-containing protein At1g04840 (PCMP-H64).